Reading from the N-terminus, the 469-residue chain is Tubulin gamma chain (469 aa).

142 to 148 (AGGTGSG) is a GTP binding site.

This sequence belongs to the tubulin family.

It localises to the cytoplasm. The protein localises to the cytoskeleton. It is found in the microtubule organizing center. The protein resides in the spindle pole body. Functionally, tubulin is the major constituent of microtubules. The gamma chain is found at microtubule organizing centers (MTOC) such as the spindle poles or the centrosome, suggesting that it is involved in the minus-end nucleation of microtubule assembly. This is Tubulin gamma chain (TUB4) from Microbotryum violaceum (Anther smut fungus).